The sequence spans 116 residues: Probable non-functional immunoglobulin kappa variable 3-7 (116 aa).

An N-terminal signal peptide occupies residues 1–21 (MEAPAQLLFLLLLWLPDTTRE). The interval 21-43 (EIVMTQSPPTLSLSPGERVTLSC) is framework-1. In terms of domain architecture, Ig-like spans 22–116 (IVMTQSPPTL…YYCQQDYNLP (95 aa)). Cys-43 and Cys-109 form a disulfide bridge. The tract at residues 44 to 55 (RASQSVSSSYLT) is complementarity-determining-1. Residues 56–70 (WYQQKPGQAPRLLIY) are framework-2. The complementarity-determining-2 stretch occupies residues 71–77 (GASTRAT). The segment at 78-109 (SIPARFSGSGSGTDFTLTISSLQPEDFAVYYC) is framework-3. A complementarity-determining-3 region spans residues 110–116 (QQDYNLP).

As to quaternary structure, immunoglobulins are composed of two identical heavy chains and two identical light chains; disulfide-linked.

It is found in the secreted. Its subcellular location is the cell membrane. Its function is as follows. Probable non-functional open reading frame (ORF) of V region of the variable domain of immunoglobulin light chains. Non-functional ORF generally cannot participate in the synthesis of a productive immunoglobulin chain due to altered V-(D)-J or switch recombination and/or splicing site (at mRNA level) and/or conserved amino acid change (protein level). Immunoglobulins, also known as antibodies, are membrane-bound or secreted glycoproteins produced by B lymphocytes. In the recognition phase of humoral immunity, the membrane-bound immunoglobulins serve as receptors which, upon binding of a specific antigen, trigger the clonal expansion and differentiation of B lymphocytes into immunoglobulins-secreting plasma cells. Secreted immunoglobulins mediate the effector phase of humoral immunity, which results in the elimination of bound antigens. The antigen binding site is formed by the variable domain of one heavy chain, together with that of its associated light chain. Thus, each immunoglobulin has two antigen binding sites with remarkable affinity for a particular antigen. The variable domains are assembled by a process called V-(D)-J rearrangement and can then be subjected to somatic hypermutations which, after exposure to antigen and selection, allow affinity maturation for a particular antigen. This is Probable non-functional immunoglobulin kappa variable 3-7 from Homo sapiens (Human).